Consider the following 877-residue polypeptide: Neurotrypsin (877 aa).

The first 20 residues, 1 to 20 (MTLARFVLALVLGALPEVVS), serve as a signal peptide directing secretion. Residue N26 is glycosylated (N-linked (GlcNAc...) asparagine). Positions 31–90 (HRHRHRHSPPPGLQYPYYLPTQQRPPRTRPPPPLPRFPRPPRALPAQRPHALQAGHTPRP) are disordered. Low complexity predominate over residues 44 to 55 (QYPYYLPTQQRP). The span at 58–73 (TRPPPPLPRFPRPPRA) shows a compositional bias: pro residues. One can recognise a Kringle domain in the interval 95-167 (CPAGEPWVSV…GKVDWGYCDC (73 aa)). 20 disulfides stabilise this stretch: C95/C167, C111/C151, C140/C165, C197/C261, C210/C271, C241/C251, C307/C371, C320/C381, C351/C361, C414/C477, C427/C487, C457/C467, C527/C591, C540/C601, C571/C581, C621/C752, C663/C679, C767/C833, C796/C810, and C823/C852. 4 consecutive SRCR domains span residues 172 to 273 (VRLR…TCSF), 282 to 383 (IRLV…SCTP), 389 to 489 (IRLA…ACYP), and 502 to 603 (VRLM…ICDY). The zymogen activation region stretch occupies residues 621-632 (CGLRLLHRRQKR). Residues 633–876 (IIGGKNSLRG…FVPWIKSVTK (244 aa)) form the Peptidase S1 domain. The active-site Charge relay system is H678. N-linked (GlcNAc...) asparagine glycosylation is present at N685. Residue D728 is the Charge relay system of the active site. S827 serves as the catalytic Charge relay system.

It belongs to the peptidase S1 family.

Its subcellular location is the secreted. In terms of biological role, plays a role in neuronal plasticity and the proteolytic action may subserve structural reorganizations associated with learning and memory operations. The protein is Neurotrypsin (PRSS12) of Pongo pygmaeus (Bornean orangutan).